Reading from the N-terminus, the 163-residue chain is Small ribosomal subunit protein uS5 (163 aa).

The S5 DRBM domain occupies 8–71 (LIEKIVYLNR…EKARKEMISV (64 aa)).

It belongs to the universal ribosomal protein uS5 family. Part of the 30S ribosomal subunit. Contacts proteins S4 and S8.

With S4 and S12 plays an important role in translational accuracy. Its function is as follows. Located at the back of the 30S subunit body where it stabilizes the conformation of the head with respect to the body. This is Small ribosomal subunit protein uS5 from Maridesulfovibrio salexigens (strain ATCC 14822 / DSM 2638 / NCIMB 8403 / VKM B-1763) (Desulfovibrio salexigens).